Here is a 23-residue protein sequence, read N- to C-terminus: Dahlein-4.2 (23 aa).

In terms of tissue distribution, expressed by the skin dorsal glands.

It localises to the secreted. Its function is as follows. Has no antimicrobial activity. In Ranoidea dahlii (Dahl's aquatic frog), this protein is Dahlein-4.2.